The chain runs to 1238 residues: Protein translocase subunit SecA 1 (1238 aa).

ATP-binding positions include Gln107, 125–129 (GEGKT), and Asp570. The tract at residues 1194 to 1220 (AAGSEGRAEGSVDTVRVEEPRIGRNAP) is disordered. Positions 1199–1215 (GRAEGSVDTVRVEEPRI) are enriched in basic and acidic residues. Zn(2+) contacts are provided by Cys1221, Cys1223, Cys1232, and Cys1233.

This sequence belongs to the SecA family. Monomer and homodimer. Part of the essential Sec protein translocation apparatus which comprises SecA, SecYEG and auxiliary proteins SecDF. Other proteins may also be involved. Zn(2+) is required as a cofactor.

It is found in the cell inner membrane. The protein resides in the cytoplasm. It carries out the reaction ATP + H2O + cellular proteinSide 1 = ADP + phosphate + cellular proteinSide 2.. Part of the Sec protein translocase complex. Interacts with the SecYEG preprotein conducting channel. Has a central role in coupling the hydrolysis of ATP to the transfer of proteins into and across the cell membrane, serving as an ATP-driven molecular motor driving the stepwise translocation of polypeptide chains across the membrane. The polypeptide is Protein translocase subunit SecA 1 (Rhodopirellula baltica (strain DSM 10527 / NCIMB 13988 / SH1)).